A 429-amino-acid chain; its full sequence is Probable M18 family aminopeptidase 2 (429 aa).

Zn(2+)-binding residues include His-82, His-156, and His-401.

This sequence belongs to the peptidase M18 family. Zn(2+) serves as cofactor.

The chain is Probable M18 family aminopeptidase 2 from Pseudomonas entomophila (strain L48).